Consider the following 436-residue polypeptide: Xylose isomerase (436 aa).

Residues D306 and D308 each contribute to the Mg(2+) site.

It belongs to the xylose isomerase family. Homotetramer. The cofactor is Mg(2+).

The protein resides in the cytoplasm. The enzyme catalyses alpha-D-xylose = alpha-D-xylulofuranose. This Sinorhizobium fredii (strain NBRC 101917 / NGR234) protein is Xylose isomerase.